A 78-amino-acid chain; its full sequence is MKLTCVVIVAVLLLTACQLITADDSRGTQKHRSLRSTTKVSKAADCIEAGNYCGPTVMKLCCGFCSPYSKICMNYPKN.

Residues 1–22 (MKLTCVVIVAVLLLTACQLITA) form the signal peptide. Positions 23–42 (DDSRGTQKHRSLRSTTKVSK) are excised as a propeptide. 3 cysteine pairs are disulfide-bonded: Cys46/Cys62, Cys53/Cys65, and Cys61/Cys72.

Belongs to the conotoxin O1 superfamily. As to expression, expressed by the venom duct.

It localises to the secreted. In terms of biological role, omega-conotoxins act at presynaptic membranes, they bind and block voltage-gated calcium channels (Cav). This Conus striatus (Striated cone) protein is Omega-conotoxin-like 2.